Consider the following 318-residue polypeptide: Polyprenal reductase (318 aa).

Residues 1–11 (MAPWAEAEHSA) are Cytoplasmic-facing. The chain crosses the membrane as a helical span at residues 12 to 34 (LNPLRAVWLTLTAAFLLTLLLQL). The Lumenal segment spans residues 35–80 (LPPGLLPGCAIFQDLIRYGKTKCGEPSRPAACRAFDVPKRYFSHFY). Residues 81–101 (IISVLWNGFLLWCLTQSLFLG) form a helical membrane-spanning segment. Topologically, residues 102 to 117 (APFPSWLHGLLRILGA) are cytoplasmic. The helical transmembrane segment at 118-138 (AQFQGGELALSAFLVLVFLWL) threads the bilayer. Residues 139–157 (HSLRRLFECLYVSVFSNVM) are Lumenal-facing. Residues 158–178 (IHVVQYCFGLVYYVLVGLTVL) form a helical membrane-spanning segment. At 179–194 (SQVPMDGRNAYITGKN) the chain is on the cytoplasmic side. The chain crosses the membrane as a helical span at residues 195–215 (LLMQARWFHILGMMMFIWSSA). At 216-260 (HQYKCHVILGNLRKNKAGVVIHCNHRIPFGDWFEYVSSPNYLAEL) the chain is on the lumenal side. A helical membrane pass occupies residues 261–281 (MIYVSMAVTFGFHNLTWWLVV). Residues 282–318 (TNVFFNQALSAFLSHQFYKSKFVSYPKHRKAFLPFLF) are Cytoplasmic-facing.

Belongs to the steroid 5-alpha reductase family. Polyprenal reductase subfamily. In terms of tissue distribution, expressed in preadipocytes (at protein level). Overexpressed in hormone-refractory prostate cancers (HRPC). Almost no or little expression in normal adult organs.

Its subcellular location is the endoplasmic reticulum membrane. The enzyme catalyses a di-trans,poly-cis-dolichal + NADP(+) = a di-trans,poly-cis-polyprenal + NADPH + H(+). It catalyses the reaction a 3-oxo-5alpha-steroid + NADP(+) = a 3-oxo-Delta(4)-steroid + NADPH + H(+). It carries out the reaction androst-4-ene-3,17-dione + NADPH + H(+) = 5alpha-androstan-3,17-dione + NADP(+). The catalysed reaction is 17beta-hydroxy-5alpha-androstan-3-one + NADP(+) = testosterone + NADPH + H(+). It functions in the pathway protein modification; protein glycosylation. Functionally, plays a key role in early steps of protein N-linked glycosylation by being involved in the conversion of polyprenol into dolichol. Acts as a polyprenal reductase that mediates the reduction of polyprenal into dolichal in a NADP-dependent mechanism. Dolichols are required for the synthesis of dolichol-linked monosaccharides and the oligosaccharide precursor used for N-glycosylation. Also able to convert testosterone (T) into 5-alpha-dihydrotestosterone (DHT). The sequence is that of Polyprenal reductase from Homo sapiens (Human).